A 347-amino-acid chain; its full sequence is tRNA N6-adenosine threonylcarbamoyltransferase (347 aa).

Residues histidine 115 and histidine 119 each coordinate Fe cation. Substrate-binding positions include 137 to 141, aspartate 170, glycine 183, and asparagine 281; that span reads LASGG. Residue aspartate 309 coordinates Fe cation.

Belongs to the KAE1 / TsaD family. Requires Fe(2+) as cofactor.

Its subcellular location is the cytoplasm. The enzyme catalyses L-threonylcarbamoyladenylate + adenosine(37) in tRNA = N(6)-L-threonylcarbamoyladenosine(37) in tRNA + AMP + H(+). Functionally, required for the formation of a threonylcarbamoyl group on adenosine at position 37 (t(6)A37) in tRNAs that read codons beginning with adenine. Is involved in the transfer of the threonylcarbamoyl moiety of threonylcarbamoyl-AMP (TC-AMP) to the N6 group of A37, together with TsaE and TsaB. TsaD likely plays a direct catalytic role in this reaction. The sequence is that of tRNA N6-adenosine threonylcarbamoyltransferase from Methylorubrum populi (strain ATCC BAA-705 / NCIMB 13946 / BJ001) (Methylobacterium populi).